Consider the following 155-residue polypeptide: NADPH-dependent 7-cyano-7-deazaguanine reductase (155 aa).

Residue Cys53 is the Thioimide intermediate of the active site. Asp60 serves as the catalytic Proton donor. Substrate contacts are provided by residues 75–77 (VES) and 94–95 (HE).

Belongs to the GTP cyclohydrolase I family. QueF type 1 subfamily.

It is found in the cytoplasm. The catalysed reaction is 7-aminomethyl-7-carbaguanine + 2 NADP(+) = 7-cyano-7-deazaguanine + 2 NADPH + 3 H(+). It participates in tRNA modification; tRNA-queuosine biosynthesis. Its function is as follows. Catalyzes the NADPH-dependent reduction of 7-cyano-7-deazaguanine (preQ0) to 7-aminomethyl-7-deazaguanine (preQ1). The polypeptide is NADPH-dependent 7-cyano-7-deazaguanine reductase (Ruegeria pomeroyi (strain ATCC 700808 / DSM 15171 / DSS-3) (Silicibacter pomeroyi)).